The primary structure comprises 298 residues: Protein pxr1 (298 aa).

Over residues methionine 1–lysine 11 the composition is skewed to basic residues. A disordered region spans residues methionine 1–arginine 23. Positions threonine 25–glycine 79 constitute a G-patch domain. A disordered region spans residues leucine 145–glycine 274. A compositionally biased stretch (polar residues) spans valine 151–asparagine 164. Basic residues predominate over residues arginine 199–lysine 222. Residues glycine 247–serine 256 are compositionally biased toward polar residues.

This sequence belongs to the PINX1 family.

The protein localises to the nucleus. Its subcellular location is the nucleolus. Its function is as follows. Involved in rRNA-processing at A0, A1 and A2 sites and negatively regulates telomerase. In Aspergillus terreus (strain NIH 2624 / FGSC A1156), this protein is Protein pxr1 (pxr1).